A 376-amino-acid polypeptide reads, in one-letter code: Histidinol-phosphate aminotransferase (376 aa).

A disordered region spans residues 1-21; the sequence is MQPRDLSAHEPYVPGRGTKEV. The residue at position 222 (K222) is an N6-(pyridoxal phosphate)lysine.

Belongs to the class-II pyridoxal-phosphate-dependent aminotransferase family. Histidinol-phosphate aminotransferase subfamily. The cofactor is pyridoxal 5'-phosphate.

The catalysed reaction is L-histidinol phosphate + 2-oxoglutarate = 3-(imidazol-4-yl)-2-oxopropyl phosphate + L-glutamate. The protein operates within amino-acid biosynthesis; L-histidine biosynthesis; L-histidine from 5-phospho-alpha-D-ribose 1-diphosphate: step 7/9. This chain is Histidinol-phosphate aminotransferase, found in Haloquadratum walsbyi (strain DSM 16790 / HBSQ001).